The primary structure comprises 431 residues: U-box domain-containing protein 20 (431 aa).

In terms of domain architecture, U-box spans 32–106; the sequence is TIPSQFQCPI…QGWCGSSLGG (75 aa).

It catalyses the reaction S-ubiquitinyl-[E2 ubiquitin-conjugating enzyme]-L-cysteine + [acceptor protein]-L-lysine = [E2 ubiquitin-conjugating enzyme]-L-cysteine + N(6)-ubiquitinyl-[acceptor protein]-L-lysine.. The protein operates within protein modification; protein ubiquitination. Functionally, functions as an E3 ubiquitin ligase. This chain is U-box domain-containing protein 20 (PUB20), found in Arabidopsis thaliana (Mouse-ear cress).